Here is a 539-residue protein sequence, read N- to C-terminus: CTP synthase (539 aa).

An amidoligase domain region spans residues 1–267 (MKEAKFIFVT…GTQVLEHFHL (267 aa)). Position 15 (Ser15) interacts with CTP. A UTP-binding site is contributed by Ser15. ATP is bound by residues 16–21 (SLGKGL) and Asp73. Asp73 and Glu141 together coordinate Mg(2+). CTP contacts are provided by residues 148-150 (DIE), 188-193 (KTKPTQ), and Lys224. Residues 188-193 (KTKPTQ) and Lys224 contribute to the UTP site. The Glutamine amidotransferase type-1 domain occupies 292 to 536 (TVSIVGKYTE…IKAVVNKVKK (245 aa)). L-glutamine is bound at residue Gly359. The active-site Nucleophile; for glutamine hydrolysis is the Cys386. L-glutamine-binding positions include 387–390 (LGMQ), Glu410, and Arg464. Catalysis depends on residues His509 and Glu511.

The protein belongs to the CTP synthase family. Homotetramer.

It carries out the reaction UTP + L-glutamine + ATP + H2O = CTP + L-glutamate + ADP + phosphate + 2 H(+). The enzyme catalyses L-glutamine + H2O = L-glutamate + NH4(+). It catalyses the reaction UTP + NH4(+) + ATP = CTP + ADP + phosphate + 2 H(+). It participates in pyrimidine metabolism; CTP biosynthesis via de novo pathway; CTP from UDP: step 2/2. Allosterically activated by GTP, when glutamine is the substrate; GTP has no effect on the reaction when ammonia is the substrate. The allosteric effector GTP functions by stabilizing the protein conformation that binds the tetrahedral intermediate(s) formed during glutamine hydrolysis. Inhibited by the product CTP, via allosteric rather than competitive inhibition. Its function is as follows. Catalyzes the ATP-dependent amination of UTP to CTP with either L-glutamine or ammonia as the source of nitrogen. Regulates intracellular CTP levels through interactions with the four ribonucleotide triphosphates. This Wolbachia sp. subsp. Brugia malayi (strain TRS) protein is CTP synthase.